A 309-amino-acid chain; its full sequence is Olfactory receptor 5B21 (309 aa).

The Extracellular segment spans residues 1–26 (MENSTEVTEFILLGLTDDPNLQIPLL). N-linked (GlcNAc...) asparagine glycosylation is present at Asn3. The helical transmembrane segment at 27-47 (LAFLFIYLITLLGNGGMMVII) threads the bilayer. At 48-55 (HSDSHLHT) the chain is on the cytoplasmic side. A helical transmembrane segment spans residues 56-76 (PMYFFLSNLSLVDLGYSSAVA). Residues 77–95 (PKTVAALRSGDKAISYDGC) are Extracellular-facing. Cys95 and Cys177 are joined by a disulfide. A helical transmembrane segment spans residues 96–116 (AAQFFFFVGFATVECYLLASM). At 117-137 (AYDRHAAVCRPLHYTTTMTAG) the chain is on the cytoplasmic side. Residues 138–158 (VCALLATGSYVSGFLNASIHA) traverse the membrane as a helical segment. Residues 159–199 (AGTFRLSFCGSNEINHFFCDIPPLLALSCSDTRISKLVVFV) are Extracellular-facing. Residues 200–220 (AGFNVFFTLLVILISYFFICI) traverse the membrane as a helical segment. Residues 221 to 235 (TIQRMHSAEGQKKVF) are Cytoplasmic-facing. The helical transmembrane segment at 236-256 (STCASHLTALSIFYGTIIFMY) threads the bilayer. Topologically, residues 257–270 (LQPNSSQSVDTDKI) are extracellular. Asn260 is a glycosylation site (N-linked (GlcNAc...) asparagine). Residues 271 to 291 (ASVFYTVVIPMLNPLIYSLRN) form a helical membrane-spanning segment. Residues 292–309 (KEVKSALWKILNKLYPQY) are Cytoplasmic-facing.

This sequence belongs to the G-protein coupled receptor 1 family.

The protein localises to the cell membrane. Functionally, odorant receptor. This chain is Olfactory receptor 5B21, found in Homo sapiens (Human).